A 312-amino-acid chain; its full sequence is DNA-directed RNA polymerase subunit alpha (312 aa).

The tract at residues 1–229 is alpha N-terminal domain (alpha-NTD); it reads MLQYQIDRID…ELFQPLATVT (229 aa). Positions 241-312 are alpha C-terminal domain (alpha-CTD); the sequence is SPEAQIPLEE…ISIPQSRTSV (72 aa).

Belongs to the RNA polymerase alpha chain family. In cyanobacteria the RNAP catalytic core is composed of 2 alpha, 1 beta, 1 beta', 1 gamma and 1 omega subunit. When a sigma factor is associated with the core the holoenzyme is formed, which can initiate transcription.

It catalyses the reaction RNA(n) + a ribonucleoside 5'-triphosphate = RNA(n+1) + diphosphate. DNA-dependent RNA polymerase catalyzes the transcription of DNA into RNA using the four ribonucleoside triphosphates as substrates. The protein is DNA-directed RNA polymerase subunit alpha of Prochlorococcus marinus (strain MIT 9215).